The sequence spans 390 residues: Centrosomal protein of 44 kDa (390 aa).

Positions 11–195 (RNLEQVLRLL…ISEDTLSPIT (185 aa)) are binds with microtubules and centrioles. A coiled-coil region spans residues 233 to 267 (EITALQTMLAECQEKLKELTLIEKRLDCLEQKMKG). Positions 323 to 347 (KNKVGRPASIPLSSRYSTASSDSTP) are disordered. Residues Ser-331 and Ser-345 each carry the phosphoserine modification. Low complexity predominate over residues 335-345 (SSRYSTASSDS). Thr-346 carries the phosphothreonine modification. Positions 361–385 (SEETTIQKMERMKKMFEETAELLKC) form a coiled coil.

In terms of assembly, interacts with CROCC. Interacts with POC1B; the interaction is direct and recruits POC1B to centriolar microtubules. Binds to centriolar microtubules.

It is found in the cytoplasm. The protein localises to the cytoskeleton. The protein resides in the microtubule organizing center. It localises to the centrosome. Its subcellular location is the centriole. It is found in the spindle pole. The protein localises to the midbody. In terms of biological role, centriole-enriched microtubule-binding protein involved in centriole biogenesis. In collaboration with CEP295 and POC1B, is required for the centriole-to-centrosome conversion by ensuring the formation of bona fide centriole wall. Functions as a linker component that maintains centrosome cohesion. Associates with CROCC and regulates its stability and localization to the centrosome. The chain is Centrosomal protein of 44 kDa (CEP44) from Macaca fascicularis (Crab-eating macaque).